We begin with the raw amino-acid sequence, 963 residues long: Importin-13 (963 aa).

20 HEAT repeats span residues Glu-24–Val-54, Pro-56–Arg-88, Thr-95–Met-135, Ala-142–Thr-179, Leu-194–Gln-231, Leu-236–Ser-268, Val-276–Asp-325, Trp-330–Leu-372, Glu-375–Leu-438, Ala-440–Ile-476, Val-487–Asp-522, Pro-524–Cys-558, Leu-562–Ala-600, Val-603–Phe-648, Pro-676–Leu-716, Phe-720–Phe-754, Phe-761–Arg-803, Val-815–Leu-845, Glu-860–Asn-893, and Phe-897–Leu-931. Positions Ala-45 to Arg-111 constitute an Importin N-terminal domain.

Belongs to the importin beta family. As to quaternary structure, interacts with UBC9, RAN, RBM8A, eIF-1A and PAX6. Expressed in fetal brain, heart, intestine and kidney.

It localises to the cytoplasm. It is found in the nucleus. Functionally, functions in nuclear protein import as nuclear transport receptor. Serves as receptor for nuclear localization signals (NLS) in cargo substrates. Is thought to mediate docking of the importin/substrate complex to the nuclear pore complex (NPC) through binding to nucleoporin and the complex is subsequently translocated through the pore by an energy requiring, Ran-dependent mechanism. At the nucleoplasmic side of the NPC, Ran binds to the importin, the importin/substrate complex dissociates and importin is re-exported from the nucleus to the cytoplasm where GTP hydrolysis releases Ran. The directionality of nuclear import is thought to be conferred by an asymmetric distribution of the GTP- and GDP-bound forms of Ran between the cytoplasm and nucleus. Mediates the nuclear import of UBC9, the RBM8A/MAGOH complex, PAX6 and probably other members of the paired homeobox family. Also mediates nuclear export of eIF-1A, and the cytoplasmic release of eIF-1A is triggered by the loading of import substrates onto IPO13. The sequence is that of Importin-13 (Ipo13) from Rattus norvegicus (Rat).